A 334-amino-acid chain; its full sequence is Cytochrome c biogenesis protein CcsA (334 aa).

The next 8 helical transmembrane spans lie at 12–32 (NTAF…VVFP), 35–55 (WLVQ…TALL), 67–87 (ISNL…VHFI), 96–116 (FVGA…ALTL), 141–161 (VMMV…AFLF), 242–262 (IIGL…VWAN), 277–297 (WALI…TKGW), and 303–323 (AILA…VNLL).

The protein belongs to the CcmF/CycK/Ccl1/NrfE/CcsA family. As to quaternary structure, may interact with ccs1.

It localises to the cellular thylakoid membrane. Functionally, required during biogenesis of c-type cytochromes (cytochrome c6 and cytochrome f) at the step of heme attachment. This chain is Cytochrome c biogenesis protein CcsA, found in Synechocystis sp. (strain ATCC 27184 / PCC 6803 / Kazusa).